Here is a 608-residue protein sequence, read N- to C-terminus: Chaperone protein HtpG (608 aa).

An a; substrate-binding region spans residues 1-332; the sequence is MQFQTEVNQL…VEDLPLNVSR (332 aa). The interval 333-536 is b; the sequence is EILQENQILK…KNKLDFAMQQ (204 aa). Residues 537-608 are c; it reads LLKQMGQEQN…LTKIINKAFS (72 aa).

Belongs to the heat shock protein 90 family. Homodimer.

Its subcellular location is the cytoplasm. Its function is as follows. Molecular chaperone. Has ATPase activity. The polypeptide is Chaperone protein HtpG (Campylobacter jejuni subsp. doylei (strain ATCC BAA-1458 / RM4099 / 269.97)).